Here is a 265-residue protein sequence, read N- to C-terminus: MGLPGLFCLAVLAASSFSKAREEEITPVVSIAYKVLEVFPKGRWVLITCCAPQPPPPITYSLCGTKNIKVAKKVVKTHEPASFNLNVTLKSSPDLLTYFCWASSTSGAHVDSARLQMHWELWSKPVSELRANFTLQDRGAGPRVEMICQASSGSPPITNSLIGKDGQVHLQQRPCHRQPANFSFLPSQTSDWFWCQAANNANVQHSALTVVPPGGDQKMEDWQGPLESPILALPLYRSTRRLSEEEFGGFRIGNGEVRGRKAAAM.

The N-terminal stretch at Met-1–Ala-20 is a signal peptide. 2 N-linked (GlcNAc...) asparagine glycosylation sites follow: Asn-86 and Asn-132.

As to expression, expressed in fetal liver and bone marrow. Expressed in peripheral blood lymphocyte B cells.

It localises to the secreted. Probable B cell-associated cytokine that plays a role in the regulation of humoral immune responses. Involved in lymphocyte B cell development and immunoglobulin/IgA production. This Homo sapiens (Human) protein is Protein IL-40.